We begin with the raw amino-acid sequence, 428 residues long: Immunoglobulin superfamily containing leucine-rich repeat protein (428 aa).

A signal peptide spans 1–18; it reads MQELHLLWWALLLGLAQA. Residues 19–50 form the LRRNT domain; the sequence is CPEPCDCGEKYGFQIADCAYRDLESVPPGFPA. Asparagine 51 carries an N-linked (GlcNAc...) asparagine glycan. 5 LRR repeats span residues 51 to 72, 75 to 96, 99 to 122, 123 to 144, and 147 to 168; these read NVTT…AFRE, LLQS…ALAS, HLKS…HNLS, ALQL…AFRS, and ALRS…TFTP. Residues 180-231 enclose the LRRCT domain; it reads NPFDCTCGIVWLKTWALTTAVSIPEQDNIACTSPHVLKGTPLSRLPPLPCSA. One can recognise an Ig-like domain in the interval 232–343; that stretch reads PSVQLSYQPS…GSAESSVDVA (112 aa). A disulfide bridge links cysteine 257 with cysteine 327. N-linked (GlcNAc...) asparagine glycosylation occurs at asparagine 309.

Expressed in various tissues including retina, heart, skeletal muscle, prostate, ovary, small intestine, thyroid, adrenal cortex, testis, stomach and spinal cord.

The protein resides in the secreted. The protein is Immunoglobulin superfamily containing leucine-rich repeat protein (ISLR) of Homo sapiens (Human).